Here is a 417-residue protein sequence, read N- to C-terminus: Gamma-glutamyl phosphate reductase (417 aa).

It belongs to the gamma-glutamyl phosphate reductase family.

It is found in the cytoplasm. It catalyses the reaction L-glutamate 5-semialdehyde + phosphate + NADP(+) = L-glutamyl 5-phosphate + NADPH + H(+). Its pathway is amino-acid biosynthesis; L-proline biosynthesis; L-glutamate 5-semialdehyde from L-glutamate: step 2/2. In terms of biological role, catalyzes the NADPH-dependent reduction of L-glutamate 5-phosphate into L-glutamate 5-semialdehyde and phosphate. The product spontaneously undergoes cyclization to form 1-pyrroline-5-carboxylate. In Haemophilus influenzae (strain PittEE), this protein is Gamma-glutamyl phosphate reductase.